The following is a 264-amino-acid chain: ATP synthase subunit a (264 aa).

6 helical membrane passes run 29 to 49 (TWHI…LWLF), 89 to 109 (VIAP…FMDM), 134 to 154 (DLNI…YYSI), 177 to 197 (IPVN…SLAL), 208 to 228 (LIFI…ALGV), and 235 to 255 (LIFH…LTIV).

The protein belongs to the ATPase A chain family. In terms of assembly, F-type ATPases have 2 components, CF(1) - the catalytic core - and CF(0) - the membrane proton channel. CF(1) has five subunits: alpha(3), beta(3), gamma(1), delta(1), epsilon(1). CF(0) has three main subunits: a(1), b(2) and c(9-12). The alpha and beta chains form an alternating ring which encloses part of the gamma chain. CF(1) is attached to CF(0) by a central stalk formed by the gamma and epsilon chains, while a peripheral stalk is formed by the delta and b chains.

The protein localises to the cell inner membrane. Its function is as follows. Key component of the proton channel; it plays a direct role in the translocation of protons across the membrane. In Shewanella sediminis (strain HAW-EB3), this protein is ATP synthase subunit a.